We begin with the raw amino-acid sequence, 199 residues long: Transcription factor 15 (199 aa).

The segment at glutamate 25–proline 67 is disordered. The segment covering proline 51 to glycine 66 has biased composition (gly residues). In terms of domain architecture, bHLH spans arginine 72–leucine 124.

In terms of assembly, heterodimer; efficient DNA binding requires dimerization with another bHLH protein, such as TCF3/E12. Interacts with MEOX2.

The protein resides in the nucleus. Its function is as follows. Early transcription factor that plays a key role in somitogenesis, paraxial mesoderm development and regulation of stem cell pluripotency. Essential for the mesenchymal to epithelial transition associated with somite formation. Required for somite morphogenesis, thereby regulating patterning of the axial skeleton and skeletal muscles. Required for proper localization of somite epithelium markers during the mesenchymal to epithelial transition. Also plays a key role in regulation of stem cell pluripotency. Promotes pluripotency exit of embryonic stem cells (ESCs) by priming ESCs for differentiation. Acts as a key regulator of self-renewal of hematopoietic stem cells (HSCs) by mediating HSCs quiescence and long-term self-renewal. Together with MEOX2, regulates transcription in heart endothelial cells to regulate fatty acid transport across heart endothelial cells. Acts by forming a heterodimer with another helix-loop-helix (bHLH) protein, such as TCF3/E12, that binds DNA on E-box motifs (5'-CANNTG-3') and activates transcription of target genes. In Homo sapiens (Human), this protein is Transcription factor 15.